A 221-amino-acid chain; its full sequence is 7-cyano-7-deazaguanine synthase (221 aa).

Tyrosine 9 to leucine 19 contacts ATP. Zn(2+) contacts are provided by cysteine 186, cysteine 194, cysteine 197, and cysteine 200.

Belongs to the QueC family. Requires Zn(2+) as cofactor.

The enzyme catalyses 7-carboxy-7-deazaguanine + NH4(+) + ATP = 7-cyano-7-deazaguanine + ADP + phosphate + H2O + H(+). The protein operates within purine metabolism; 7-cyano-7-deazaguanine biosynthesis. Its function is as follows. Catalyzes the ATP-dependent conversion of 7-carboxy-7-deazaguanine (CDG) to 7-cyano-7-deazaguanine (preQ(0)). This chain is 7-cyano-7-deazaguanine synthase, found in Psychromonas ingrahamii (strain DSM 17664 / CCUG 51855 / 37).